We begin with the raw amino-acid sequence, 737 residues long: Ribosome-releasing factor 2, mitochondrial (737 aa).

Residues 1-29 constitute a mitochondrion transit peptide; that stretch reads MLKYALHSGGMPRNRLLRQLSAYIFRRSY. One can recognise a tr-type G domain in the interval 31-310; that stretch reads SNIRNIGILA…AVNTYLPAPE (280 aa). GTP contacts are provided by residues 40–47, 104–108, and 158–161; these read AHIDAGKT, DTPGH, and NKMD.

Belongs to the TRAFAC class translation factor GTPase superfamily. Classic translation factor GTPase family. EF-G/EF-2 subfamily.

The protein localises to the mitochondrion. Functionally, mitochondrial GTPase that mediates the disassembly of ribosomes from messenger RNA at the termination of mitochondrial protein biosynthesis. Not involved in the GTP-dependent ribosomal translocation step during translation elongation. The sequence is that of Ribosome-releasing factor 2, mitochondrial from Drosophila persimilis (Fruit fly).